The following is a 522-amino-acid chain: E3 ubiquitin-protein ligase DMA2 (522 aa).

Disordered regions lie at residues 1 to 56 and 69 to 92; these read MYTP…RPAS and QNSQ…PSNS. Residues 14-35 show a composition bias toward low complexity; it reads APTSSMTSNSSSASNANTTSSS. Residues 36-49 show a composition bias toward polar residues; it reads GINPRNRASGTPSN. Ser-206 carries the phosphoserine modification. Glycyl lysine isopeptide (Lys-Gly) (interchain with G-Cter in ubiquitin) cross-links involve residues Lys-211, Lys-256, Lys-258, Lys-288, Lys-310, Lys-333, Lys-343, Lys-346, Lys-366, Lys-406, Lys-412, and Lys-423. The 64-residue stretch at 295–358 folds into the FHA domain; the sequence is LVIGRYTERV…SGTFLNHQRL (64 aa). The RING-type zinc finger occupies 433-477; the sequence is CSICLCKIKPCQAIFISPCAHSWHFRCVRRLVMLSYPQFVCPNCR.

It belongs to the DMA1 family. UBC4-dependent autoubiquitination occurs at Lys-211, Lys-258, Lys-288, Lys-310, Lys-333, Lys-343, Lys-346, Lys-366, Lys-406, Lys-412 and Lys-423. UBC4-dependent autoubiquitination is responsible for DMA2 turnover. UBC13/MMS2-dependent autoubiquitination occurs at Lys-258, Lys-310, Lys-346 and Lys-366. Lys-211, Lys-256, Lys-288, Lys-310, Lys-343, Lys-258, Lys-366 and Lys-412 are also ubiquitinated in trans by DMA1 E3 ligase in association with UBC4.

The protein resides in the cytoplasm. The catalysed reaction is S-ubiquitinyl-[E2 ubiquitin-conjugating enzyme]-L-cysteine + [acceptor protein]-L-lysine = [E2 ubiquitin-conjugating enzyme]-L-cysteine + N(6)-ubiquitinyl-[acceptor protein]-L-lysine.. Functionally, E3 ubiquitin-protein ligase which functions in cell cycle retarding in conjunction with the UBC4 and UBC13/MMS2 complex, 2 E2 ubiquitin conjugating enzymes. Involved in nutritional control of the cell cycle. Required for proper spindle positioning, likely regulating septin ring deposition at the bud neck. This is E3 ubiquitin-protein ligase DMA2 (DMA2) from Saccharomyces cerevisiae (strain ATCC 204508 / S288c) (Baker's yeast).